A 989-amino-acid chain; its full sequence is Voltage-gated delayed rectifier potassium channel KCNH1 (989 aa).

Over 1–220 the chain is Cytoplasmic; the sequence is MTMAGGRRGL…LHYCVFKTTW (220 aa). In terms of domain architecture, PAS spans 14–94; sequence QNTFLENIVR…QTFENYEMNS (81 aa). A PAC domain is found at 93 to 145; it reads NSFEILMYKKNRTPVWFFVKIAPIRNEQDKVVLFLCTFSDITAFKQPIEDDSC. The required for phosphatidylinositol bisphosphate binding stretch occupies residues 151–162; sequence FARLTRALTSSR. Residues 221 to 241 traverse the membrane as a helical segment; the sequence is DWIILILTFYTAILVPYNVSF. Residues 242-248 are Extracellular-facing; the sequence is KTRQNNV. A helical membrane pass occupies residues 249-269; it reads AWLVVDSIVDVIFLVDIVLNF. Residues 270–290 are Cytoplasmic-facing; the sequence is HTTFVGPAGEVISDPKLIRMN. Residues 291-309 form a helical membrane-spanning segment; the sequence is YLKTWFVIDLLSCLPYDVI. The Extracellular portion of the chain corresponds to 310-345; the sequence is NAFENVDEVSAFMGDPGKIGFADQIPPPLEGRESQG. Residues 346 to 368 form a helical; Voltage-sensor membrane-spanning segment; it reads ISSLFSSLKVVRLLRLGRVARKL. The Cytoplasmic portion of the chain corresponds to 369–377; that stretch reads DHYIEYGAA. Residues 378-399 form a helical membrane-spanning segment; that stretch reads VLVLLVCVFGLAAHWMACIWYS. Residues 400–448 are Extracellular-facing; it reads IGDYEIFDEDTKTIRNNSWLYQLALDIGTPYQFNGSGSGKWEGGPSKNS. Asparagine 415 and asparagine 433 each carry an N-linked (GlcNAc...) asparagine glycan. Residues 449-470 constitute an intramembrane region (pore-forming); sequence VYISSLYFTMTSLTSVGFGNIA. Residues 463 to 468 carry the Selectivity filter motif; the sequence is SVGFGN. Residues 471–477 lie on the Extracellular side of the membrane; sequence PSTDIEK. A helical transmembrane segment spans residues 478–498; it reads IFAVAIMMIGSLLYATIFGNV. The Cytoplasmic segment spans residues 499–989; sequence TTIFQQMYAN…ESDRDIFGAS (491 aa). Residues 673-770 are calmodulin-binding; the sequence is KRDALQKVLE…LDDLDVEKGN (98 aa). Positions 699–701 are interaction with cyclic nucleotide-binding pocket; sequence YNL. Composition is skewed to basic and acidic residues over residues 857-879 and 887-901; these read ESME…KTDS and SDLR…RSPQ. Disordered stretches follow at residues 857–905 and 961–989; these read ESME…DRSP and RGSA…FGAS. The segment at 924–964 is CAD (involved in subunit assembly); the sequence is ATVLEVKYELKEDIKALNAKMTSIEKQLSEILRILMSRGSA. Positions 962–979 are enriched in polar residues; the sequence is GSAQSPQETGEISRPQSP. Phosphoserine occurs at positions 974, 978, and 981. Residues 980-989 show a composition bias toward basic and acidic residues; the sequence is ESDRDIFGAS.

It belongs to the potassium channel family. H (Eag) (TC 1.A.1.20) subfamily. Kv10.1/KCNH1 sub-subfamily. Homomultimer. The potassium channel is composed of a homo- or heterotetrameric complex of pore-forming alpha subunits that can associate with modulating beta subunits. Heteromultimer with KCNH5/EAG2. Interacts with ALG10B. Interacts with RABEP1. Interacts (via C-terminus) with CTTN. Interacts (via C-terminal cytoplasmic region) with Ca(2+)-bound calmodulin. In terms of processing, channel activity is regulated via tyrosine phosphorylation/dephosphorylation by SRC and PTPN6. Detected in brain (at protein level). Highly expressed in olfactory bulb. Detected in brain cortex, hippocampus, brain stem, striatum, thalamus, hypothalamus and spinal cord.

The protein localises to the cell membrane. It localises to the nucleus inner membrane. Its subcellular location is the cell projection. The protein resides in the dendrite. It is found in the axon. The protein localises to the presynaptic cell membrane. It localises to the perikaryon. Its subcellular location is the postsynaptic density membrane. The protein resides in the early endosome membrane. The enzyme catalyses K(+)(in) = K(+)(out). With respect to regulation, channel activity is inhibited by interaction with Ca(2+)-bound calmodulin. Interaction of a single pore-forming alpha subunit with a calmodulin chain is sufficient to promote channel closure. Channel activity is not regulated by cyclic nucleotides. Channel activity is inhibited by binding intracellular phosphatidylinositol-3,5-bisphosphate and phosphatidylinositol-4,5-bisphosphate (PIP2), but is not inhibited by phosphatidylinositol 4-phosphate. Its function is as follows. Pore-forming (alpha) subunit of a voltage-gated delayed rectifier potassium channel that mediates outward-rectifying potassium currents which, on depolarization, reaches a steady-state level and do not inactivate. The activation kinetics depend on the prepulse potential and external divalent cation concentration. With negative prepulses, the current activation is delayed and slowed down several fold, whereas more positive prepulses speed up activation. The time course of activation is biphasic with a fast and a slowly activating current component. Activates at more positive membrane potentials and exhibit a steeper activation curve. Channel properties are modulated by subunit assembly. Mediates IK(NI) current in myoblasts. Involved in the regulation of cell proliferation and differentiation, in particular adipogenic and osteogenic differentiation in bone marrow-derived mesenchymal stem cells (MSCs). This Mus musculus (Mouse) protein is Voltage-gated delayed rectifier potassium channel KCNH1.